A 417-amino-acid chain; its full sequence is Serine hydroxymethyltransferase (417 aa).

Residues L121 and 125-127 (GHL) each bind (6S)-5,6,7,8-tetrahydrofolate. K230 carries the N6-(pyridoxal phosphate)lysine modification. 355-357 (SPF) lines the (6S)-5,6,7,8-tetrahydrofolate pocket.

The protein belongs to the SHMT family. Homodimer. Pyridoxal 5'-phosphate serves as cofactor.

The protein localises to the cytoplasm. The enzyme catalyses (6R)-5,10-methylene-5,6,7,8-tetrahydrofolate + glycine + H2O = (6S)-5,6,7,8-tetrahydrofolate + L-serine. It participates in one-carbon metabolism; tetrahydrofolate interconversion. The protein operates within amino-acid biosynthesis; glycine biosynthesis; glycine from L-serine: step 1/1. Its function is as follows. Catalyzes the reversible interconversion of serine and glycine with tetrahydrofolate (THF) serving as the one-carbon carrier. This reaction serves as the major source of one-carbon groups required for the biosynthesis of purines, thymidylate, methionine, and other important biomolecules. Also exhibits THF-independent aldolase activity toward beta-hydroxyamino acids, producing glycine and aldehydes, via a retro-aldol mechanism. In Marinobacter nauticus (strain ATCC 700491 / DSM 11845 / VT8) (Marinobacter aquaeolei), this protein is Serine hydroxymethyltransferase.